Here is a 148-residue protein sequence, read N- to C-terminus: Large ribosomal subunit protein uL15 (148 aa).

The segment covering 1–12 has biased composition (basic and acidic residues); sequence MSDPIKLHDLRP. The tract at residues 1-45 is disordered; it reads MSDPIKLHDLRPAKGANKAKTRVGRGEASKGKTAGRGTKGTKARN.

The protein belongs to the universal ribosomal protein uL15 family. As to quaternary structure, part of the 50S ribosomal subunit.

Its function is as follows. Binds to the 23S rRNA. This is Large ribosomal subunit protein uL15 from Corynebacterium urealyticum (strain ATCC 43042 / DSM 7109).